We begin with the raw amino-acid sequence, 168 residues long: Photosystem I assembly protein Ycf3 (168 aa).

TPR repeat units lie at residues 35–68 (AFTY…EIDP), 72–105 (SYIL…NPFL), and 120–153 (GEQA…TPGN).

This sequence belongs to the Ycf3 family.

Its subcellular location is the plastid. The protein localises to the chloroplast thylakoid membrane. In terms of biological role, essential for the assembly of the photosystem I (PSI) complex. May act as a chaperone-like factor to guide the assembly of the PSI subunits. The chain is Photosystem I assembly protein Ycf3 from Liriodendron tulipifera (Tuliptree).